The following is a 188-amino-acid chain: UPF0200 protein M1627_1244 (188 aa).

ATP is bound at residue 15-22 (GMPGSGKS).

This sequence belongs to the UPF0200 family.

This chain is UPF0200 protein M1627_1244, found in Saccharolobus islandicus (strain M.16.27) (Sulfolobus islandicus).